Reading from the N-terminus, the 199-residue chain is Holliday junction branch migration complex subunit RuvA (199 aa).

Positions M1–S63 are domain I. The interval D64–A142 is domain II. The interval A143–V150 is flexible linker. Residues V150–K199 are domain III.

It belongs to the RuvA family. Homotetramer. Forms an RuvA(8)-RuvB(12)-Holliday junction (HJ) complex. HJ DNA is sandwiched between 2 RuvA tetramers; dsDNA enters through RuvA and exits via RuvB. An RuvB hexamer assembles on each DNA strand where it exits the tetramer. Each RuvB hexamer is contacted by two RuvA subunits (via domain III) on 2 adjacent RuvB subunits; this complex drives branch migration. In the full resolvosome a probable DNA-RuvA(4)-RuvB(12)-RuvC(2) complex forms which resolves the HJ.

The protein resides in the cytoplasm. In terms of biological role, the RuvA-RuvB-RuvC complex processes Holliday junction (HJ) DNA during genetic recombination and DNA repair, while the RuvA-RuvB complex plays an important role in the rescue of blocked DNA replication forks via replication fork reversal (RFR). RuvA specifically binds to HJ cruciform DNA, conferring on it an open structure. The RuvB hexamer acts as an ATP-dependent pump, pulling dsDNA into and through the RuvAB complex. HJ branch migration allows RuvC to scan DNA until it finds its consensus sequence, where it cleaves and resolves the cruciform DNA. In Acinetobacter baumannii (strain ACICU), this protein is Holliday junction branch migration complex subunit RuvA.